Here is a 285-residue protein sequence, read N- to C-terminus: Pantothenate synthetase (285 aa).

Position 30 to 37 (30 to 37) interacts with ATP; it reads MGNLHDGH. The Proton donor role is filled by histidine 37. (R)-pantoate is bound at residue glutamine 61. Glutamine 61 is a binding site for beta-alanine. 149–152 is an ATP binding site; it reads GEKD. Glutamine 155 contributes to the (R)-pantoate binding site. Residues isoleucine 178 and 186 to 189 each bind ATP; that span reads LSSR.

It belongs to the pantothenate synthetase family. In terms of assembly, homodimer.

The protein resides in the cytoplasm. It catalyses the reaction (R)-pantoate + beta-alanine + ATP = (R)-pantothenate + AMP + diphosphate + H(+). The protein operates within cofactor biosynthesis; (R)-pantothenate biosynthesis; (R)-pantothenate from (R)-pantoate and beta-alanine: step 1/1. In terms of biological role, catalyzes the condensation of pantoate with beta-alanine in an ATP-dependent reaction via a pantoyl-adenylate intermediate. The protein is Pantothenate synthetase of Buchnera aphidicola subsp. Acyrthosiphon pisum (strain Tuc7).